The primary structure comprises 314 residues: UDP-N-acetylenolpyruvoylglucosamine reductase (314 aa).

Positions 25-191 (KIGGPADLFA…VRVGMELRWG (167 aa)) constitute an FAD-binding PCMH-type domain. Residue Arg170 is part of the active site. Ser220 (proton donor) is an active-site residue. The active site involves Glu291.

It belongs to the MurB family. The cofactor is FAD.

The protein localises to the cytoplasm. It catalyses the reaction UDP-N-acetyl-alpha-D-muramate + NADP(+) = UDP-N-acetyl-3-O-(1-carboxyvinyl)-alpha-D-glucosamine + NADPH + H(+). It participates in cell wall biogenesis; peptidoglycan biosynthesis. Functionally, cell wall formation. The polypeptide is UDP-N-acetylenolpyruvoylglucosamine reductase (Heliobacterium modesticaldum (strain ATCC 51547 / Ice1)).